The chain runs to 185 residues: Ribosome-recycling factor (185 aa).

Belongs to the RRF family.

Its subcellular location is the cytoplasm. Responsible for the release of ribosomes from messenger RNA at the termination of protein biosynthesis. May increase the efficiency of translation by recycling ribosomes from one round of translation to another. This is Ribosome-recycling factor from Shewanella oneidensis (strain ATCC 700550 / JCM 31522 / CIP 106686 / LMG 19005 / NCIMB 14063 / MR-1).